The sequence spans 485 residues: Glutamyl-tRNA(Gln) amidotransferase subunit A (485 aa).

Catalysis depends on charge relay system residues K79 and S154. Residue S178 is the Acyl-ester intermediate of the active site.

The protein belongs to the amidase family. GatA subfamily. As to quaternary structure, heterotrimer of A, B and C subunits.

It carries out the reaction L-glutamyl-tRNA(Gln) + L-glutamine + ATP + H2O = L-glutaminyl-tRNA(Gln) + L-glutamate + ADP + phosphate + H(+). In terms of biological role, allows the formation of correctly charged Gln-tRNA(Gln) through the transamidation of misacylated Glu-tRNA(Gln) in organisms which lack glutaminyl-tRNA synthetase. The reaction takes place in the presence of glutamine and ATP through an activated gamma-phospho-Glu-tRNA(Gln). In Staphylococcus epidermidis (strain ATCC 12228 / FDA PCI 1200), this protein is Glutamyl-tRNA(Gln) amidotransferase subunit A.